A 581-amino-acid polypeptide reads, in one-letter code: AP2-like ethylene-responsive transcription factor AIL6 (581 aa).

Disordered regions lie at residues 105-132 (VRYS…HHNQ) and 205-240 (NNTN…TDSE). 2 stretches are compositionally biased toward low complexity: residues 108–122 (SDNS…SLTQ) and 218–232 (RGNN…NNNN). 2 DNA-binding regions (AP2/ERF) span residues 268–331 (IYRG…TNFP) and 367–425 (IYRG…TNFE).

This sequence belongs to the AP2/ERF transcription factor family. AP2 subfamily. Expressed in roots, seedlings, hypocotyl, inflorescence, siliques, and pistils. Also detected at low levels in leaves.

The protein resides in the nucleus. In terms of biological role, probably acts as a transcriptional activator. Binds to the GCC-box pathogenesis-related promoter element. May be involved in the regulation of gene expression by stress factors and by components of stress signal transduction pathways. This chain is AP2-like ethylene-responsive transcription factor AIL6, found in Arabidopsis thaliana (Mouse-ear cress).